Here is a 143-residue protein sequence, read N- to C-terminus: Small ribosomal subunit protein uS9 (143 aa).

A disordered region spans residues 123 to 143; sequence RPEPKKFGGRGARSRFQKSYR. The segment covering 134–143 has biased composition (basic residues); that stretch reads ARSRFQKSYR.

This sequence belongs to the universal ribosomal protein uS9 family.

This chain is Small ribosomal subunit protein uS9 (RPS16), found in Kluyveromyces lactis (strain ATCC 8585 / CBS 2359 / DSM 70799 / NBRC 1267 / NRRL Y-1140 / WM37) (Yeast).